A 323-amino-acid chain; its full sequence is CTD kinase subunit beta (323 aa).

This sequence belongs to the cyclin family. CTDK-I consists of three subunits, CTK1, CTK2 and CTK3 (also called alpha, beta and gamma). Interacts with CTK1. Heterodimerization with CTK3 is required to protect this subunit from degradation. In terms of processing, phosphorylated. Ubiquitinated. Phosphorylation and ubiquitination lead to degradation in growth-related way by the ubiquitin-proteasome pathway. Neither phosphorylation nor degradation requires association with CTK1.

It localises to the nucleus. The protein localises to the nucleolus. In terms of biological role, cyclin subunit of the CTDK-I complex, which hyperphosphorylates the C-terminal heptapeptide repeat domain (CTD) of the largest RNA polymerase II subunit. CTDK-I phosphorylates 'Ser-5' if the CTD substrate is not phosphorylated at 'Ser-5', but will phosphorylate 'Ser-2' of a CTD substrate if 'Ser-5' is already phosphorylated. CTDK-I is also more reactive toward substrates that are prephosphorylated at 'Ser-2' or 'Ser-5' compared with an unphosphorylated CTD substrate, therefore efficiently creating doubly phosphorylated CTD repeats. Involved in RNA polymerase II transcriptional elongation, and as part of the CTDK-I complex, pre-mRNA 3'-end processing and SET2 mediated H3K36 methylation. Together with CTK3, required for CTK1 CTD kinase activation. Required for DNA damage induced transcription. Involved in the adaptation to alternative carbon sources, including galactose, glycerol and ethanol, but not raffinose. Required for the integrity of the rDNA locus. The protein is CTD kinase subunit beta (CTK2) of Saccharomyces cerevisiae (strain ATCC 204508 / S288c) (Baker's yeast).